The following is a 365-amino-acid chain: Transmembrane protein 25 (365 aa).

An N-terminal signal peptide occupies residues 1 to 26 (MELPLSQATLRHTLLLLPALLSSGQG). Topologically, residues 27–232 (ELAPQIDGQT…APGLLATRIE (206 aa)) are extracellular. Positions 30-123 (PQIDGQTWAE…SGRPANASVI (94 aa)) constitute an Ig-like domain. Cys52 and Cys107 form a disulfide bridge. Asn106, Asn162, Asn192, and Asn205 each carry an N-linked (GlcNAc...) asparagine glycan. Residues 233–253 (VPLLGIVVAGGLALGTLVGFS) traverse the membrane as a helical segment. At 254–365 (TLVACLVCRK…SSVSSDEIWL (112 aa)) the chain is on the cytoplasmic side.

In terms of assembly, interacts with GRIN2B. Expressed throughout the brain with higher levels within the hippocampus.

It is found in the late endosome. The protein resides in the lysosome. The protein localises to the cell membrane. Its subcellular location is the secreted. Functionally, in neurons, modulates the degradation of NMDA receptor GRIN2B subunit. Plays a role in the regulation of neuronal excitability. The polypeptide is Transmembrane protein 25 (Mus musculus (Mouse)).